We begin with the raw amino-acid sequence, 220 residues long: IQ domain-containing protein F3 (220 aa).

A compositionally biased stretch (basic and acidic residues) spans 1 to 22; the sequence is MELDQDQKVETPEAAENGKDEM. The disordered stretch occupies residues 1–81; sequence MELDQDQKVE…KQIQDEKTGI (81 aa). Acidic residues predominate over residues 23 to 50; sequence QLEEQTQDEDTTETETETETETEAEAEG. Residues 69–93 adopt a coiled-coil conformation; sequence QAEKQIQDEKTGIKEADRAIQEQTQ. Positions 146-175 constitute an IQ domain; sequence AELAGVKIQAWWRGTLVRRTLLLAILSAWT.

The polypeptide is IQ domain-containing protein F3 (Iqcf3) (Rattus norvegicus (Rat)).